The chain runs to 545 residues: ATP synthase subunit alpha (545 aa).

Position 173–180 (173–180 (GDRQTGKT)) interacts with ATP.

The protein belongs to the ATPase alpha/beta chains family. In terms of assembly, F-type ATPases have 2 components, CF(1) - the catalytic core - and CF(0) - the membrane proton channel. CF(1) has five subunits: alpha(3), beta(3), gamma(1), delta(1), epsilon(1). CF(0) has three main subunits: a(1), b(2) and c(9-12). The alpha and beta chains form an alternating ring which encloses part of the gamma chain. CF(1) is attached to CF(0) by a central stalk formed by the gamma and epsilon chains, while a peripheral stalk is formed by the delta and b chains.

It localises to the cell membrane. The enzyme catalyses ATP + H2O + 4 H(+)(in) = ADP + phosphate + 5 H(+)(out). Its function is as follows. Produces ATP from ADP in the presence of a proton gradient across the membrane. The alpha chain is a regulatory subunit. This chain is ATP synthase subunit alpha, found in Paenarthrobacter aurescens (strain TC1).